The following is a 62-amino-acid chain: UPF0337 protein mll8179 (62 aa).

The segment at 1–42 (MRNMVNKDQVAGLAKQLKGSVKQAAGKATGNRRTQAEGMADK) is disordered.

This sequence belongs to the UPF0337 (CsbD) family.

This Mesorhizobium japonicum (strain LMG 29417 / CECT 9101 / MAFF 303099) (Mesorhizobium loti (strain MAFF 303099)) protein is UPF0337 protein mll8179.